The sequence spans 604 residues: Putative O-acetyltransferase SAV0974 (604 aa).

11 helical membrane-spanning segments follow: residues 15-35 (YMPG…IYHL), 43-63 (GFLG…SLLL), 85-105 (LLPA…LLKS), 150-170 (AIEE…LLTI), 176-196 (IGFI…FIYS), 212-232 (LQTL…KLKN), 240-260 (YVID…FFII), 267-287 (IYDG…ASVV), 310-330 (YSLY…YVDG), 332-352 (IPVY…ELSY), and 377-397 (FIRM…LVGA). Catalysis depends on residues serine 459, aspartate 581, and histidine 584.

The protein belongs to the acyltransferase 3 family.

The protein localises to the cell membrane. This is Putative O-acetyltransferase SAV0974 from Staphylococcus aureus (strain Mu50 / ATCC 700699).